A 372-amino-acid polypeptide reads, in one-letter code: PqqA peptide cyclase (372 aa).

The Radical SAM core domain maps to 4–220 (APPPLSVLLE…ETARRQLGDR (217 aa)). Cysteine 18, cysteine 22, and cysteine 25 together coordinate [4Fe-4S] cluster. A disordered region spans residues 342-372 (ATAEQESASPAPAFIYRRPERPAAATADPLE).

It belongs to the radical SAM superfamily. PqqE family. Interacts with PqqD. The interaction is necessary for activity of PqqE. [4Fe-4S] cluster serves as cofactor.

The enzyme catalyses [PQQ precursor protein] + S-adenosyl-L-methionine = E-Y cross-linked-[PQQ precursor protein] + 5'-deoxyadenosine + L-methionine + H(+). Its pathway is cofactor biosynthesis; pyrroloquinoline quinone biosynthesis. In terms of biological role, catalyzes the cross-linking of a glutamate residue and a tyrosine residue in the PqqA protein as part of the biosynthesis of pyrroloquinoline quinone (PQQ). The protein is PqqA peptide cyclase of Xanthomonas euvesicatoria pv. vesicatoria (strain 85-10) (Xanthomonas campestris pv. vesicatoria).